We begin with the raw amino-acid sequence, 348 residues long: MTAPSQVLKIRRPDDWHLHLRDGDMLKTVVPYTSEIYGRAIVMPNLAPPVTTVEAAVAYRQRILDAVPAGHNFTPLMTCYLTDSLDPNELERGFNEGVFTAAKLYPANATTNSSHGVTSIDAIMPVLERMEKIGMPLLVHGEVTHADIDIFDREARFIESVMEPLRQRLTALKVVFEHITTKDAADYVRDGNERLAATITPQHLMFNRNHMLVGGVRPHLYCLPILKRNIHQQALRELVASGFNRVFLGTDSAPHARHRKESSCGCAGCFNAPTALGSYATVFEEMNALQHFEAFCSVNGPQFYGLPVNDTFIELVREEQQVAESIALTDDTLVPFLAGETVRWSVKQ.

2 residues coordinate Zn(2+): His17 and His19. Substrate contacts are provided by residues 19 to 21 (HLR) and Asn45. Residues Lys103, His140, and His178 each coordinate Zn(2+). At Lys103 the chain carries N6-carboxylysine. Position 140 (His140) interacts with substrate. Leu223 is a binding site for substrate. Asp251 is a Zn(2+) binding site. Asp251 is a catalytic residue. Substrate contacts are provided by His255 and Ala267.

It belongs to the metallo-dependent hydrolases superfamily. DHOase family. Class II DHOase subfamily. As to quaternary structure, homodimer. The cofactor is Zn(2+).

The enzyme catalyses (S)-dihydroorotate + H2O = N-carbamoyl-L-aspartate + H(+). Its pathway is pyrimidine metabolism; UMP biosynthesis via de novo pathway; (S)-dihydroorotate from bicarbonate: step 3/3. Its function is as follows. Catalyzes the reversible cyclization of carbamoyl aspartate to dihydroorotate. In Escherichia coli O139:H28 (strain E24377A / ETEC), this protein is Dihydroorotase.